The sequence spans 65 residues: Large ribosomal subunit protein bL35 (65 aa).

The interval 1–20 (MPKMKTNSGSKKRFTLTGTG) is disordered.

The protein belongs to the bacterial ribosomal protein bL35 family.

This chain is Large ribosomal subunit protein bL35, found in Bacteroides thetaiotaomicron (strain ATCC 29148 / DSM 2079 / JCM 5827 / CCUG 10774 / NCTC 10582 / VPI-5482 / E50).